A 387-amino-acid polypeptide reads, in one-letter code: Testis-expressed protein 9 (387 aa).

Disordered stretches follow at residues 1 to 25 (MAGRSVRVPRRGSAGTQSRGQLAAG) and 58 to 133 (REQQ…LKYP). Composition is skewed to polar residues over residues 70–91 (ALTTSCKEEGGSSSRDLLSSEG) and 103–115 (KNTGPVNKIQNRL). Positions 184 to 347 (IGTEAQIRFL…ERQKGELMIG (164 aa)) form a coiled coil.

As to expression, testis-specific.

Its subcellular location is the cytoplasm. It is found in the cytoskeleton. It localises to the microtubule organizing center. The protein localises to the centrosome. The protein resides in the centriolar satellite. The polypeptide is Testis-expressed protein 9 (Tex9) (Mus musculus (Mouse)).